The primary structure comprises 395 residues: uncharacterized protein (395 aa).

The segment at 247–270 (GGTVVPPNPDQPNPTPPDSSSPNY) is disordered. Pro residues predominate over residues 252–265 (PPNPDQPNPTPPDS).

This is an uncharacterized protein from Vibrio cholerae serotype O1 (strain ATCC 39315 / El Tor Inaba N16961).